The chain runs to 399 residues: Probable endo-xylogalacturonan hydrolase A (399 aa).

The signal sequence occupies residues 1 to 19 (MTFGKAAFLSFSLFGASWA). 5 PbH1 repeats span residues 177-207 (TTNAVFSDMRLDATSKSENLPKNTDGFDIGE), 208-229 (STYVTISGTTVSNNDDCVAFKP), 231-251 (CNYLTVTDITCTGSHGLSVGS), 260-283 (VQNVRVEGATMISSTKAAGIKTYP), and 293-314 (VTNVTWKDITIQNCDYAIQIQS). The active-site Proton donor is the D222. H245 is an active-site residue. 2 N-linked (GlcNAc...) asparagine glycosylation sites follow: N295 and N382.

The protein belongs to the glycosyl hydrolase 28 family.

The protein localises to the secreted. In terms of biological role, pectinolytic enzyme involved in the degradation of xylogalacturonan (xga), a galacturonan backbone heavily substituted with xylose, and which is one important component of the hairy regions of pectin. Activity requires a galacturonic acid backbone substituted with xylose. This chain is Probable endo-xylogalacturonan hydrolase A (xghA), found in Emericella nidulans (strain FGSC A4 / ATCC 38163 / CBS 112.46 / NRRL 194 / M139) (Aspergillus nidulans).